Reading from the N-terminus, the 513-residue chain is NAD(P)H-quinone oxidoreductase subunit 2, chloroplastic (513 aa).

14 consecutive transmembrane segments (helical) span residues 11–31, 38–58, 78–98, 112–132, 133–153, 167–187, 219–239, 256–276, 290–310, 318–338, 348–368, 389–409, 422–442, and 478–498; these read NLIT…ILMI, SVWL…ILLF, GFTI…IPLS, FLIL…ANDL, VTIF…AGQA, LLMG…LYGL, FGAL…GFKI, PTPV…ALAT, WHIV…LIAA, MLAY…LVGN, YLLI…IFGL, AFAL…AGFF, HLYL…YYYL, and LGLT…NPLI.

This sequence belongs to the complex I subunit 2 family. In terms of assembly, NDH is composed of at least 16 different subunits, 5 of which are encoded in the nucleus.

The protein localises to the plastid. It is found in the chloroplast thylakoid membrane. It carries out the reaction a plastoquinone + NADH + (n+1) H(+)(in) = a plastoquinol + NAD(+) + n H(+)(out). It catalyses the reaction a plastoquinone + NADPH + (n+1) H(+)(in) = a plastoquinol + NADP(+) + n H(+)(out). Functionally, NDH shuttles electrons from NAD(P)H:plastoquinone, via FMN and iron-sulfur (Fe-S) centers, to quinones in the photosynthetic chain and possibly in a chloroplast respiratory chain. The immediate electron acceptor for the enzyme in this species is believed to be plastoquinone. Couples the redox reaction to proton translocation, and thus conserves the redox energy in a proton gradient. The chain is NAD(P)H-quinone oxidoreductase subunit 2, chloroplastic from Staurastrum punctulatum (Green alga).